The primary structure comprises 261 residues: MKFGMGSAQACPCQVPRAASTTWVPCQICGPRERHGPRTPGGQLPGARRGPGPRRPAPLPARPPGALGSVLRPLRARPGCRPRRPHPAARCLPLRPHRPTRRHRRPGGFPLAWGSPQPAPRPAPGRSSALALAGGAAPGVARAQRPGGSGGRSHPGGPGSPRGGGTVGPGDRGPAAADGGRPQRTVRAAETRGAAAAPPLTLEGPVQSHHGTPALTQGPQSPRDGAQLGACTRPVDVRDSGGRPLPPPDTLASAGDFLCTM.

The interval 27–261 is disordered; sequence QICGPRERHG…ASAGDFLCTM (235 aa). The segment covering 40–50 has biased composition (low complexity); it reads PGGQLPGARRG. Over residues 53-63 the composition is skewed to pro residues; that stretch reads PRRPAPLPARP. Residues 64–73 are compositionally biased toward low complexity; it reads PGALGSVLRP. Basic residues-rich tracts occupy residues 74–87 and 95–106; these read LRARPGCRPRRPHP and RPHRPTRRHRRP. Positions 124 to 146 are enriched in low complexity; that stretch reads PGRSSALALAGGAAPGVARAQRP. The span at 147–171 shows a compositional bias: gly residues; the sequence is GGSGGRSHPGGPGSPRGGGTVGPGD. Over residues 172-197 the composition is skewed to low complexity; that stretch reads RGPAAADGGRPQRTVRAAETRGAAAA.

As to quaternary structure, does not interact with BCL2.

Its function is as follows. Does not affect cell growth. The polypeptide is Bcl-2-binding component 3, isoforms 3/4 (BBC3) (Homo sapiens (Human)).